A 365-amino-acid chain; its full sequence is Protein mab-21-like (365 aa).

The protein belongs to the mab-21 family.

This Aedes aegypti (Yellowfever mosquito) protein is Protein mab-21-like.